A 113-amino-acid polypeptide reads, in one-letter code: Beta-defensin 112 (113 aa).

Intrachain disulfides connect C54–C82, C61–C75, and C65–C83.

This sequence belongs to the beta-defensin family.

It localises to the secreted. Its function is as follows. Has antibacterial activity. This is Beta-defensin 112 (DEFB112) from Pan troglodytes (Chimpanzee).